A 153-amino-acid chain; its full sequence is Histone H2B.6 (153 aa).

Basic and acidic residues-rich tracts occupy residues 1–28 (MAPK…EKAP) and 36–53 (EKRL…EGKK). The interval 1-60 (MAPKAEKKPAAKKPAEEEPAAEKAEKAPAGKKPKAEKRLPAGKGEKGSGEGKKAGRKKGK) is disordered. An N6-acetyllysine mark is found at lysine 7 and lysine 37. Lysine 149 participates in a covalent cross-link: Glycyl lysine isopeptide (Lys-Gly) (interchain with G-Cter in ubiquitin).

It belongs to the histone H2B family. The nucleosome is a histone octamer containing two molecules each of H2A, H2B, H3 and H4 assembled in one H3-H4 heterotetramer and two H2A-H2B heterodimers. The octamer wraps approximately 147 bp of DNA. Post-translationally, can be acetylated to form H2BK6ac and H2BK33ac. Monoubiquitinated by BRE1 to form H2BK143ub1 and deubiquitinated by UBP26. Required for heterochromatic histone H3 di- and trimethylation at H3K4me. May give a specific tag for epigenetic transcriptional activation.

The protein localises to the nucleus. It is found in the chromosome. Core component of nucleosome. Nucleosomes wrap and compact DNA into chromatin, limiting DNA accessibility to the cellular machineries which require DNA as a template. Histones thereby play a central role in transcription regulation, DNA repair, DNA replication and chromosomal stability. DNA accessibility is regulated via a complex set of post-translational modifications of histones, also called histone code, and nucleosome remodeling. In Oryza sativa subsp. japonica (Rice), this protein is Histone H2B.6 (H2B.6).